Reading from the N-terminus, the 61-residue chain is Small ribosomal subunit protein uS14 (61 aa).

Cys24, Cys27, Cys40, and Cys43 together coordinate Zn(2+).

Belongs to the universal ribosomal protein uS14 family. Zinc-binding uS14 subfamily. In terms of assembly, part of the 30S ribosomal subunit. Contacts proteins S3 and S10. Zn(2+) serves as cofactor.

Binds 16S rRNA, required for the assembly of 30S particles and may also be responsible for determining the conformation of the 16S rRNA at the A site. The chain is Small ribosomal subunit protein uS14 from Acidithiobacillus ferrooxidans (strain ATCC 23270 / DSM 14882 / CIP 104768 / NCIMB 8455) (Ferrobacillus ferrooxidans (strain ATCC 23270)).